Reading from the N-terminus, the 252-residue chain is AA9 family lytic polysaccharide monooxygenase B (252 aa).

Residues 1–20 (MVSFTKTFFAIVACALGVQA) form the signal peptide. Cu(2+) is bound by residues H21 and H106. A disulfide bridge links C72 with C198. N-linked (GlcNAc...) asparagine glycosylation occurs at N158. O2-binding residues include H184 and Q193. Y195 is a Cu(2+) binding site. The N-linked (GlcNAc...) asparagine glycan is linked to N237.

Belongs to the polysaccharide monooxygenase AA9 family. The cofactor is Cu(2+).

The protein localises to the secreted. The enzyme catalyses [(1-&gt;4)-beta-D-glucosyl]n+m + reduced acceptor + O2 = 4-dehydro-beta-D-glucosyl-[(1-&gt;4)-beta-D-glucosyl]n-1 + [(1-&gt;4)-beta-D-glucosyl]m + acceptor + H2O.. Its function is as follows. Lytic polysaccharide monooxygenase (LPMO) that depolymerizes crystalline and amorphous polysaccharides via the oxidation of scissile alpha- or beta-(1-4)-glycosidic bonds, yielding C1 or C4 oxidation products. Catalysis by LPMOs requires the reduction of the active-site copper from Cu(II) to Cu(I) by a reducing agent and H(2)O(2) or O(2) as a cosubstrate. The synergistic activity of LPMO9B with xylanase Xyl10G or cellulase Cel5B shows efficient bioconversion rates of 56 and 174 percent in pretreated kenaf (Hibiscus cannabinus) and oak, respectively. This chain is AA9 family lytic polysaccharide monooxygenase B, found in Gloeophyllum trabeum (strain ATCC 11539 / FP-39264 / Madison 617) (Brown rot fungus).